The sequence spans 495 residues: Probable aspartic-type endopeptidase OPSB (495 aa).

The signal sequence occupies residues 1 to 19; it reads MRGDSFIWSLATAIPLLST. In terms of domain architecture, Peptidase A1 spans 73 to 408; it reads YFCNLTLGTP…DLDNNEISIA (336 aa). N-linked (GlcNAc...) asparagine glycosylation occurs at Asn-76. The active site involves Asp-91. N-linked (GlcNAc...) asparagine glycosylation occurs at Asn-136. Asp-290 is an active-site residue. The N-linked (GlcNAc...) asparagine glycan is linked to Asn-413. The segment at 448–470 is disordered; sequence TGLPGVETGVPGSRPPSSKAAGQ. Ala-467 carries the GPI-anchor amidated alanine lipid modification. The propeptide at 468–495 is removed in mature form; the sequence is AGQAKRPDFVLGVAAVGLAGAGMLFAAM.

This sequence belongs to the peptidase A1 family.

The protein resides in the cell membrane. Probable GPI-anchored aspartic-type endopeptidase which contributes to virulence. This is Probable aspartic-type endopeptidase OPSB (OPSB) from Trichophyton verrucosum (strain HKI 0517).